The chain runs to 385 residues: Bifunctional chorismate mutase/prephenate dehydratase (385 aa).

One can recognise a Chorismate mutase domain in the interval M1–L92. Substrate contacts are provided by R11, R28, K39, D48, E52, S84, and Q88. Residues N105–R285 form the Prephenate dehydratase domain. Positions N286–P385 are regulatory. Positions T299 to P376 constitute an ACT domain.

The protein resides in the cytoplasm. It carries out the reaction chorismate = prephenate. The catalysed reaction is prephenate + H(+) = 3-phenylpyruvate + CO2 + H2O. The protein operates within amino-acid biosynthesis; L-phenylalanine biosynthesis; phenylpyruvate from prephenate: step 1/1. It participates in metabolic intermediate biosynthesis; prephenate biosynthesis; prephenate from chorismate: step 1/1. Catalyzes the Claisen rearrangement of chorismate to prephenate and the decarboxylation/dehydration of prephenate to phenylpyruvate. This is Bifunctional chorismate mutase/prephenate dehydratase (pheA) from Buchnera aphidicola subsp. Acyrthosiphon pisum (strain APS) (Acyrthosiphon pisum symbiotic bacterium).